The chain runs to 431 residues: Enolase (431 aa).

Gln163 lines the (2R)-2-phosphoglycerate pocket. Glu205 (proton donor) is an active-site residue. The Mg(2+) site is built by Asp242, Glu288, and Asp315. Lys340, Arg369, Ser370, and Lys391 together coordinate (2R)-2-phosphoglycerate. The active-site Proton acceptor is Lys340.

This sequence belongs to the enolase family. The cofactor is Mg(2+).

Its subcellular location is the cytoplasm. It is found in the secreted. The protein resides in the cell surface. The enzyme catalyses (2R)-2-phosphoglycerate = phosphoenolpyruvate + H2O. The protein operates within carbohydrate degradation; glycolysis; pyruvate from D-glyceraldehyde 3-phosphate: step 4/5. In terms of biological role, catalyzes the reversible conversion of 2-phosphoglycerate (2-PG) into phosphoenolpyruvate (PEP). It is essential for the degradation of carbohydrates via glycolysis. This is Enolase from Trichlorobacter lovleyi (strain ATCC BAA-1151 / DSM 17278 / SZ) (Geobacter lovleyi).